A 2798-amino-acid polypeptide reads, in one-letter code: Kinesin-like protein KIN-12F (2798 aa).

Positions 1 to 165 (MVRDLAAVRR…RPPMSSGQRG (165 aa)) are disordered. 2 stretches are compositionally biased toward low complexity: residues 8-22 (VRRT…SSAS) and 31-58 (PVDA…QPPQ). Residues 210-547 (NVQVVIRVRP…LKFAQRARLI (338 aa)) form the Kinesin motor domain. Residue 291-298 (GQTGSGKT) participates in ATP binding. Residues 600-615 (DVDDGTESMNMDEEND) are compositionally biased toward acidic residues. The disordered stretch occupies residues 600–621 (DVDDGTESMNMDEENDNDAHDR). Coiled-coil stretches lie at residues 792-835 (ELKR…HSSN), 890-987 (LAEE…HRRQ), 1014-1108 (LKRM…VMKE), 1281-1322 (QRAM…LKNE), and 2130-2333 (ELVD…VRQQ). Residues 2338–2359 (PSSGQATSSLEGGMGDFTDSSR) are disordered. Coiled coils occupy residues 2361-2427 (SREI…VKSD) and 2545-2758 (ESKE…LKLK). A disordered region spans residues 2772–2798 (RSESSSLSSGRSRSPSVCRSPSISSFR). Positions 2774–2798 (ESSSLSSGRSRSPSVCRSPSISSFR) are enriched in low complexity.

The protein belongs to the TRAFAC class myosin-kinesin ATPase superfamily. Kinesin family. KIN-12 subfamily.

In Oryza sativa subsp. japonica (Rice), this protein is Kinesin-like protein KIN-12F.